The primary structure comprises 477 residues: FAD-dependent monooxygenase paxM (477 aa).

A helical membrane pass occupies residues 4 to 24; that stretch reads AEFQVIIVGGSIGGLTLAHCL. Residues Glu35, Gly49, and Arg108 each coordinate FAD. Arg195 is an active-site residue. 2 residues coordinate FAD: Asp308 and Ala321. The helical transmembrane segment at 446–466 threads the bilayer; that stretch reads LMIYLFGLTIVYTSLTMMFDL.

The protein belongs to the paxM FAD-dependent monooxygenase family. FAD is required as a cofactor.

It is found in the membrane. The protein operates within secondary metabolite biosynthesis. Its function is as follows. FAD-dependent monooxygenase; part of the gene cluster that mediates the biosynthesis of paxilline, a mycotoxin that acts as an inhibitor of mammalian maxi-K channels. PaxG, the geranylgeranyl diphosphate (GGPP) synthase is proposed to catalyze the first step in paxilline biosynthesis. Condensation of indole-3-glycerol phosphate with GGPP by paxC then forms 3-geranylgeranylindole (3-GGI), followed by epoxidation and cyclization of this intermediate (by paxM and paxB) to form paspaline. Paspaline is subsequently converted to 13-desoxypaxilline by paxP, the latter being then converted to paxilline by paxQ. Finally paxilline can be mono- and di-prenylated by paxD. This Penicillium paxilli protein is FAD-dependent monooxygenase paxM.